Here is a 647-residue protein sequence, read N- to C-terminus: Threonine--tRNA ligase (647 aa).

A TGS domain is found at 1–61 (MIKITFPDGA…EEDGSIEIVT (61 aa)). The tract at residues 240 to 538 (DHRKLGKELD…LIETYKGAFP (299 aa)) is catalytic. Residues Cys334, His385, and His515 each coordinate Zn(2+).

Belongs to the class-II aminoacyl-tRNA synthetase family. In terms of assembly, homodimer. The cofactor is Zn(2+).

The protein localises to the cytoplasm. It carries out the reaction tRNA(Thr) + L-threonine + ATP = L-threonyl-tRNA(Thr) + AMP + diphosphate + H(+). Its function is as follows. Catalyzes the attachment of threonine to tRNA(Thr) in a two-step reaction: L-threonine is first activated by ATP to form Thr-AMP and then transferred to the acceptor end of tRNA(Thr). Also edits incorrectly charged L-seryl-tRNA(Thr). The sequence is that of Threonine--tRNA ligase from Streptococcus pyogenes serotype M3 (strain ATCC BAA-595 / MGAS315).